Consider the following 33-residue polypeptide: MSDIN-like toxin proprotein 6 (33 aa).

A propeptide spanning residues Met-1–Pro-10 is cleaved from the precursor. The cyclopeptide (Leu-Pro) cross-link spans Leu-11 to Pro-20. Residues Ser-21–Arg-33 constitute a propeptide that is removed on maturation.

This sequence belongs to the MSDIN fungal toxin family. Post-translationally, processed by the macrocyclase-peptidase enzyme POPB to yield a toxic cyclic decapeptide. POPB first removes 10 residues from the N-terminus. Conformational trapping of the remaining peptide forces the enzyme to release this intermediate rather than proceed to macrocyclization. The enzyme rebinds the remaining peptide in a different conformation and catalyzes macrocyclization of the N-terminal 10 residues.

Probable toxin that belongs to the MSDIN-like toxin family responsible for a large number of food poisoning cases and deaths. The sequence is that of MSDIN-like toxin proprotein 6 from Amanita phalloides (Death cap).